The primary structure comprises 498 residues: Probable malate:quinone oxidoreductase 2 (498 aa).

This sequence belongs to the MQO family. The cofactor is FAD.

The enzyme catalyses (S)-malate + a quinone = a quinol + oxaloacetate. It functions in the pathway carbohydrate metabolism; tricarboxylic acid cycle; oxaloacetate from (S)-malate (quinone route): step 1/1. The chain is Probable malate:quinone oxidoreductase 2 from Staphylococcus epidermidis (strain ATCC 12228 / FDA PCI 1200).